The primary structure comprises 434 residues: Trehalose-phosphatase (434 aa).

Mg(2+) contacts are provided by Asp-156 and Asp-158. Asp-158 acts as the Proton donor/acceptor in catalysis. Residue 275–277 participates in substrate binding; the sequence is QKK. A Mg(2+)-binding site is contributed by Asp-366.

Belongs to the gob-1 trehalose phosphatase family. Requires Mg(2+) as cofactor.

It carries out the reaction alpha,alpha-trehalose 6-phosphate + H2O = alpha,alpha-trehalose + phosphate. In terms of biological role, catalyzes the hydrolysis of trehalose 6-phosphate to trehalose and phosphate; prevents the accumulation of toxic levels of trehalose 6-phosphate. This Caenorhabditis briggsae protein is Trehalose-phosphatase (gob-1).